The chain runs to 268 residues: Cytochrome b-c1 complex subunit Rieske-5, mitochondrial (268 aa).

A mitochondrion-targeting transit peptide spans 1-56 (MLRIAGRKLSSSAAARSSSAFFTRNPFTFTDDSSSPTRSPSPTSLASQFLDQFRGF). Topologically, residues 57-105 (SSNSVSPAHQTGLVSDLPATVAAIKNPSSKIVYDDSNHERYPPGDPSKR) are mitochondrial matrix. The chain crosses the membrane as a helical span at residues 106–128 (AFAYFVLTGGRFVYASLVRLLIL). Over 129 to 268 (KFVLSMSASK…FMEENKLLIG (140 aa)) the chain is Mitochondrial intermembrane. Residues 178–266 (INLANSVDLG…YSFMEENKLL (89 aa)) form the Rieske domain. C211, H213, C230, and H233 together coordinate [2Fe-2S] cluster. An intrachain disulfide couples C216 to C232.

It belongs to the Rieske iron-sulfur protein family. In terms of assembly, component of the ubiquinol-cytochrome c oxidoreductase (cytochrome b-c1 complex, complex III, CIII), a multisubunit enzyme composed of 3 respiratory subunits cytochrome b, cytochrome c1 and Rieske protein, 2 core protein subunits, and several low-molecular weight protein subunits. The complex exists as an obligatory dimer and forms supercomplexes (SCs) in the inner mitochondrial membrane with cytochrome c oxidase (complex IV, CIV). [2Fe-2S] cluster is required as a cofactor. As to expression, high levels are seen in the flowers while a low level expression is seen in the roots, leaves and stems.

The protein localises to the mitochondrion inner membrane. The enzyme catalyses a quinol + 2 Fe(III)-[cytochrome c](out) = a quinone + 2 Fe(II)-[cytochrome c](out) + 2 H(+)(out). In terms of biological role, component of the ubiquinol-cytochrome c oxidoreductase, a multisubunit transmembrane complex that is part of the mitochondrial electron transport chain which drives oxidative phosphorylation. The respiratory chain contains 3 multisubunit complexes succinate dehydrogenase (complex II, CII), ubiquinol-cytochrome c oxidoreductase (cytochrome b-c1 complex, complex III, CIII) and cytochrome c oxidase (complex IV, CIV), that cooperate to transfer electrons derived from NADH and succinate to molecular oxygen, creating an electrochemical gradient over the inner membrane that drives transmembrane transport and the ATP synthase. The cytochrome b-c1 complex catalyzes electron transfer from ubiquinol to cytochrome c, linking this redox reaction to translocation of protons across the mitochondrial inner membrane, with protons being carried across the membrane as hydrogens on the quinol. In the process called Q cycle, 2 protons are consumed from the matrix, 4 protons are released into the intermembrane space and 2 electrons are passed to cytochrome c. The Rieske protein is a catalytic core subunit containing a [2Fe-2S] iron-sulfur cluster. It cycles between 2 conformational states during catalysis to transfer electrons from the quinol bound in the Q(0) site in cytochrome b to cytochrome c1. This chain is Cytochrome b-c1 complex subunit Rieske-5, mitochondrial, found in Nicotiana tabacum (Common tobacco).